The primary structure comprises 1025 residues: Probable beta-galactosidase B (1025 aa).

Positions 1-21 (MATAFWLLLFLLGSLHVLTAA) are cleaved as a signal peptide. Asn-23 is a glycosylation site (N-linked (GlcNAc...) asparagine). Tyr-90 provides a ligand contact to substrate. Asn-100 carries an N-linked (GlcNAc...) asparagine glycan. Asn-135, Ala-136, Glu-137, and Asn-195 together coordinate substrate. Catalysis depends on Glu-196, which acts as the Proton donor. N-linked (GlcNAc...) asparagine glycosylation occurs at Asn-211. Tyr-265 provides a ligand contact to substrate. Residues Cys-271 and Cys-324 are joined by a disulfide bond. Glu-308 (nucleophile) is an active-site residue. Residue Tyr-373 coordinates substrate. Residues Asn-411, Asn-456, Asn-736, Asn-776, Asn-884, Asn-925, and Asn-926 are each glycosylated (N-linked (GlcNAc...) asparagine).

It belongs to the glycosyl hydrolase 35 family.

It is found in the secreted. It carries out the reaction Hydrolysis of terminal non-reducing beta-D-galactose residues in beta-D-galactosides.. Functionally, cleaves beta-linked terminal galactosyl residues from gangliosides, glycoproteins, and glycosaminoglycans. The protein is Probable beta-galactosidase B (lacB) of Emericella nidulans (strain FGSC A4 / ATCC 38163 / CBS 112.46 / NRRL 194 / M139) (Aspergillus nidulans).